We begin with the raw amino-acid sequence, 441 residues long: D-aminoacyl-tRNA deacylase (441 aa).

Belongs to the DtdA deacylase family. In terms of assembly, monomer. The cofactor is Zn(2+).

It carries out the reaction a D-aminoacyl-tRNA + H2O = a tRNA + a D-alpha-amino acid + H(+). The catalysed reaction is glycyl-tRNA(Ala) + H2O = tRNA(Ala) + glycine + H(+). D-aminoacyl-tRNA deacylase with broad substrate specificity. By recycling D-aminoacyl-tRNA to D-amino acids and free tRNA molecules, this enzyme counteracts the toxicity associated with the formation of D-aminoacyl-tRNA entities in vivo. This is D-aminoacyl-tRNA deacylase from Natronomonas pharaonis (strain ATCC 35678 / DSM 2160 / CIP 103997 / JCM 8858 / NBRC 14720 / NCIMB 2260 / Gabara) (Halobacterium pharaonis).